A 201-amino-acid polypeptide reads, in one-letter code: Recombination protein RecR (201 aa).

A C4-type zinc finger spans residues 60 to 75; sequence CSCCGNVDTIDPCTVC. In terms of domain architecture, Toprim spans 83 to 178; it reads SVIIVVEDVS…KITRLAHGVP (96 aa).

It belongs to the RecR family.

In terms of biological role, may play a role in DNA repair. It seems to be involved in an RecBC-independent recombinational process of DNA repair. It may act with RecF and RecO. The sequence is that of Recombination protein RecR from Agrobacterium fabrum (strain C58 / ATCC 33970) (Agrobacterium tumefaciens (strain C58)).